Reading from the N-terminus, the 166-residue chain is MSDTTNEVEETYEVDEQGIAYSSESAPSADAPLRPATIAPANATGRRKEAVARVRLVPGTGEWTVNGRTLDSYFPNKLHQQVVNEPFVTTQLEGRFDVIARIHGGGITGQAGALRLGVARALNAVDVEANRPSLKKAGLLTRDARVIERKKAGLKKARKAPQFSKR.

Acidic residues predominate over residues 1-16 (MSDTTNEVEETYEVDE). Positions 1-45 (MSDTTNEVEETYEVDEQGIAYSSESAPSADAPLRPATIAPANATG) are disordered.

It belongs to the universal ribosomal protein uS9 family.

The sequence is that of Small ribosomal subunit protein uS9 from Nocardioides sp. (strain ATCC BAA-499 / JS614).